The primary structure comprises 78 residues: Large ribosomal subunit protein bL28 (78 aa).

The tract at residues 1-20 (MSRVCQVTGKGPVTGNNISH) is disordered.

This sequence belongs to the bacterial ribosomal protein bL28 family.

The polypeptide is Large ribosomal subunit protein bL28 (Pseudomonas putida (strain W619)).